The primary structure comprises 159 residues: GDP-mannose mannosyl hydrolase (159 aa).

Substrate-binding positions include 2 to 3 (FL), F8, and R36. Positions 13-153 (RSTPLVSLDF…SRAYFLAEKR (141 aa)) constitute a Nudix hydrolase domain. Residues G49, E69, and Q122 each coordinate Mg(2+). The Nudix box motif lies at 50 to 71 (GRVQKDETLEAAFERLTMAELG).

It belongs to the Nudix hydrolase family. In terms of assembly, homodimer. Requires Mg(2+) as cofactor.

The catalysed reaction is GDP-alpha-D-mannose + H2O = D-mannose + GDP + H(+). In terms of biological role, hydrolyzes GDP-mannose. In Escherichia coli O157:H7, this protein is GDP-mannose mannosyl hydrolase.